The sequence spans 184 residues: ATP synthase subunit b, chloroplastic (184 aa).

A helical transmembrane segment spans residues 31–49; sequence IINPSVVLSVLIYFGKGVL.

It belongs to the ATPase B chain family. F-type ATPases have 2 components, F(1) - the catalytic core - and F(0) - the membrane proton channel. F(1) has five subunits: alpha(3), beta(3), gamma(1), delta(1), epsilon(1). F(0) has four main subunits: a(1), b(1), b'(1) and c(10-14). The alpha and beta chains form an alternating ring which encloses part of the gamma chain. F(1) is attached to F(0) by a central stalk formed by the gamma and epsilon chains, while a peripheral stalk is formed by the delta, b and b' chains.

It localises to the plastid. The protein localises to the chloroplast thylakoid membrane. In terms of biological role, f(1)F(0) ATP synthase produces ATP from ADP in the presence of a proton or sodium gradient. F-type ATPases consist of two structural domains, F(1) containing the extramembraneous catalytic core and F(0) containing the membrane proton channel, linked together by a central stalk and a peripheral stalk. During catalysis, ATP synthesis in the catalytic domain of F(1) is coupled via a rotary mechanism of the central stalk subunits to proton translocation. Functionally, component of the F(0) channel, it forms part of the peripheral stalk, linking F(1) to F(0). This Pinus koraiensis (Korean pine) protein is ATP synthase subunit b, chloroplastic.